The primary structure comprises 457 residues: TnpB-like protein ORF457 (457 aa).

The segment at 1–22 (MPPSSGQLLGDEEREPTSTPAI) is disordered.

The protein in the N-terminal section; belongs to the transposase 2 family. It in the C-terminal section; belongs to the transposase 35 family.

The protein is TnpB-like protein ORF457 of Acidianus two-tailed virus (ATV).